The sequence spans 189 residues: UPF0301 protein RrIowa_0061 (189 aa).

Belongs to the UPF0301 (AlgH) family.

The protein is UPF0301 protein RrIowa_0061 of Rickettsia rickettsii (strain Iowa).